Here is a 254-residue protein sequence, read N- to C-terminus: Alcohol dehydrogenase 2 (254 aa).

10–33 is an NAD(+) binding site; it reads FVAGLGGIGFDTSREIVKSGPKNL. S138 is a binding site for substrate. Catalysis depends on Y151, which acts as the Proton acceptor.

Belongs to the short-chain dehydrogenases/reductases (SDR) family. Homodimer.

The catalysed reaction is a primary alcohol + NAD(+) = an aldehyde + NADH + H(+). The enzyme catalyses a secondary alcohol + NAD(+) = a ketone + NADH + H(+). The chain is Alcohol dehydrogenase 2 (Adh2) from Drosophila mulleri (Fruit fly).